The following is a 177-amino-acid chain: ATP synthase subunit delta (177 aa).

The protein belongs to the ATPase delta chain family. F-type ATPases have 2 components, F(1) - the catalytic core - and F(0) - the membrane proton channel. F(1) has five subunits: alpha(3), beta(3), gamma(1), delta(1), epsilon(1). F(0) has three main subunits: a(1), b(2) and c(10-14). The alpha and beta chains form an alternating ring which encloses part of the gamma chain. F(1) is attached to F(0) by a central stalk formed by the gamma and epsilon chains, while a peripheral stalk is formed by the delta and b chains.

The protein localises to the cell inner membrane. Functionally, f(1)F(0) ATP synthase produces ATP from ADP in the presence of a proton or sodium gradient. F-type ATPases consist of two structural domains, F(1) containing the extramembraneous catalytic core and F(0) containing the membrane proton channel, linked together by a central stalk and a peripheral stalk. During catalysis, ATP synthesis in the catalytic domain of F(1) is coupled via a rotary mechanism of the central stalk subunits to proton translocation. In terms of biological role, this protein is part of the stalk that links CF(0) to CF(1). It either transmits conformational changes from CF(0) to CF(1) or is implicated in proton conduction. The protein is ATP synthase subunit delta of Neisseria meningitidis serogroup A / serotype 4A (strain DSM 15465 / Z2491).